The following is a 269-amino-acid chain: MRYTILSKGDSKSNALKHKMINHMKDFQMVEDPDNPEIVISVGGDGTLLQAFHQYSYMLSRCAFVGIHTGHLGFYADWLPHEVEKLIIEINNSEFQVIEYPLLEIIVRYNDNGYETRHLALNEATMKTENGSTLVVDVNIRGNQFERFRGDGLCISTPSGSTAYNKALGGALIHPSLEAMQIAEIASINNRVFRTVGSPLVLPKHHTCLITPVNQDTILTTIDHVSIKHKNVNAIQYRVANEKIRFARFRPFPFWKRVHDSFISSGDDE.

The active-site Proton acceptor is the D45. Residues 45-46, 122-123, R149, D151, and A186 each bind NAD(+); these read DG and NE.

The protein belongs to the NAD kinase family. A divalent metal cation is required as a cofactor.

It is found in the cytoplasm. It carries out the reaction NAD(+) + ATP = ADP + NADP(+) + H(+). Its function is as follows. Involved in the regulation of the intracellular balance of NAD and NADP, and is a key enzyme in the biosynthesis of NADP. Catalyzes specifically the phosphorylation on 2'-hydroxyl of the adenosine moiety of NAD to yield NADP. The polypeptide is NAD kinase (Staphylococcus saprophyticus subsp. saprophyticus (strain ATCC 15305 / DSM 20229 / NCIMB 8711 / NCTC 7292 / S-41)).